The primary structure comprises 423 residues: MWLSVALLTLLDGALAAPARQHSGAFDMPLTWTPFGFTTDAIQIGTPPQPLVCFVDWTWIGQYAFTPRCHGGSQGTYACLQHGQPLYNETESRTFANQSVLYPERTWNPNHFFFYNDLSVGFGSDIERVGPDHQARVTLQLADMHFQLDMVYPFGGVYGLSPVFKSDNASTQSPFYQMWQQGVYRSPLVSFVYCHNSTFDQPTPRRELCHGKDGLQTLGGPSPVLSLSDKNNSSPILWYDNIVFPPVNEIEFVYQPAVYNYWALRLTRHLIGDEEQALNTSIGGNPGAIFDHASYGRGVPMSENSYRRLIEITGGRPVVLDANVAPNNGNQSFVSVDCEKVSSFPNVKYVFEGHDRVWEVTPANYVERREVDGKEVCVLNVRTLGEGDWIIGNFGETFAKDKVVLFDFDKLRVGLADVPAAAY.

Positions 1 to 16 (MWLSVALLTLLDGALA) are cleaved as a signal peptide. The region spanning 38-416 (TTDAIQIGTP…DFDKLRVGLA (379 aa)) is the Peptidase A1 domain. Aspartate 56 is an active-site residue. Asparagine 88, asparagine 97, asparagine 168, asparagine 196, asparagine 231, and asparagine 279 each carry an N-linked (GlcNAc...) asparagine glycan. Aspartate 291 is an active-site residue. Asparagine 330 carries N-linked (GlcNAc...) asparagine glycosylation. Cysteine 338 and cysteine 377 are disulfide-bonded.

The protein belongs to the peptidase A1 family.

Its pathway is secondary metabolite biosynthesis. Aspartic protease-like protein; part of the gene cluster that mediates the biosynthesis of pyranterreones, a family of antioxidative compounds. The first step of pyranonigrins biosynthesis is performed by the hybrid PKS-NRPS synthetase pytA that condenses 4 malonyl-CoA units ato the acetyl starter unit by the modular PKS of pytA. The acyl chain is then connected to an L-serine through the amide bond by the modular NRPS of pytA. A tetramic acid is formed and released from the PKS-NRPS pytA to give pyranterreone 5 with the help of the thioesterase pytI. Pyranterreone 5 could be methylated by pytC to afford pyranterreone 6. Both pyranterreones 5 and 6 are subsequently oxidized by the FAD-linked oxidoreductase pytB and the cytochrome P450 monooxygenase pytD to form the fused gamma-pyrone core, resulting in pyranterreones 7 and 11, respectively. The hydroxy group at C-8 of pyranterreones 7 and 11 are dehydrated by the aspartyl protease pytH to form a delta-7 double bond to give pyranterreones 3 and 1, 2 accordingly. The exo-methylene of pyranterreone 3 could be reduced into a pendant methyl by reductase pytE to provide pyranterreone 4, also known as cordylactam. Pyranterreone 4 can be reconverted to pyranterreone 3 through pytB-catalyzed dehydrogenation or further oxidized to pyranterreones 9 and 10. The sequence is that of Aspartic protease-like protein pytH from Aspergillus terreus (strain NIH 2624 / FGSC A1156).